We begin with the raw amino-acid sequence, 1598 residues long: Transposon Ty2-LR2 Gag-Pol polyprotein (1598 aa).

Composition is skewed to polar residues over residues 1–11 (MESQQLHQNPH), 19–39 (ASVT…SASN), and 49–60 (KVNSQEETTPGT). Disordered regions lie at residues 1-88 (MESQ…YQQH) and 359-449 (QHSE…SNDE). Positions 295-397 (ENNINVSDRL…SSKPRAAKAH (103 aa)) are RNA-binding. Over residues 369–381 (TSPNTTNTKVTTR) the composition is skewed to low complexity. Polar residues-rich tracts occupy residues 399–408 (IATSSKFSRV) and 415–435 (ESTV…GQQQ). Asp-457 functions as the For protease activity; shared with dimeric partner in the catalytic mechanism. The tract at residues 579-636 (NVNKSKSVNKYPYPLIHRMLGHANFRSIQKSLKKNAVTYLKESDIEWSNASTYQCPDC) is integrase-type zinc finger-like. The region spanning 656-831 (ESYEPFQYLH…AGLDITTILP (176 aa)) is the Integrase catalytic domain. Mg(2+) contacts are provided by Asp-667 and Asp-732. 3 stretches are compositionally biased toward polar residues: residues 915–927 (SFIE…QSYD), 1009–1034 (ESDT…STNE), and 1065–1082 (QRNS…STPS). Disordered stretches follow at residues 915–934 (SFIE…ESDH), 1004–1034 (MGGT…STNE), 1059–1135 (TEEP…KSSK), 1146–1165 (LPLP…VSKD), and 1170–1205 (HSRQ…TEIE). Residues 1151-1165 (LTHKSPTDTSDVSKD) show a composition bias toward basic and acidic residues. Positions 1193-1227 (KKRSLEDNETEIEVSRDTWNNKNMRSLEPPRSKKR) match the Bipartite nuclear localization signal motif. Residues 1353–1491 (NDYYITQLDI…DILGLEIKYQ (139 aa)) form the Reverse transcriptase Ty1/copia-type domain. Residues Asp-1361, Asp-1442, and Asp-1443 each contribute to the Mg(2+) site.

The capsid protein forms a homotrimer, from which the VLPs are assembled. The protease is a homodimer, whose active site consists of two apposed aspartic acid residues. Post-translationally, initially, virus-like particles (VLPs) are composed of the structural unprocessed proteins Gag and Gag-Pol, and also contain the host initiator methionine tRNA (tRNA(i)-Met) which serves as a primer for minus-strand DNA synthesis, and a dimer of genomic Ty RNA. Processing of the polyproteins occurs within the particle and proceeds by an ordered pathway, called maturation. First, the protease (PR) is released by autocatalytic cleavage of the Gag-Pol polyprotein, and this cleavage is a prerequisite for subsequent processing at the remaining sites to release the mature structural and catalytic proteins. Maturation takes place prior to the RT reaction and is required to produce transposition-competent VLPs.

It localises to the cytoplasm. The protein localises to the nucleus. It catalyses the reaction DNA(n) + a 2'-deoxyribonucleoside 5'-triphosphate = DNA(n+1) + diphosphate. The catalysed reaction is Endonucleolytic cleavage to 5'-phosphomonoester.. Functionally, capsid protein (CA) is the structural component of the virus-like particle (VLP), forming the shell that encapsulates the retrotransposons dimeric RNA genome. The particles are assembled from trimer-clustered units and there are holes in the capsid shells that allow for the diffusion of macromolecules. CA also has nucleocapsid-like chaperone activity, promoting primer tRNA(i)-Met annealing to the multipartite primer-binding site (PBS), dimerization of Ty2 RNA and initiation of reverse transcription. Its function is as follows. The aspartyl protease (PR) mediates the proteolytic cleavages of the Gag and Gag-Pol polyproteins after assembly of the VLP. Reverse transcriptase/ribonuclease H (RT) is a multifunctional enzyme that catalyzes the conversion of the retro-elements RNA genome into dsDNA within the VLP. The enzyme displays a DNA polymerase activity that can copy either DNA or RNA templates, and a ribonuclease H (RNase H) activity that cleaves the RNA strand of RNA-DNA heteroduplexes during plus-strand synthesis and hydrolyzes RNA primers. The conversion leads to a linear dsDNA copy of the retrotransposon that includes long terminal repeats (LTRs) at both ends. In terms of biological role, integrase (IN) targets the VLP to the nucleus, where a subparticle preintegration complex (PIC) containing at least integrase and the newly synthesized dsDNA copy of the retrotransposon must transit the nuclear membrane. Once in the nucleus, integrase performs the integration of the dsDNA into the host genome. This Saccharomyces cerevisiae (strain ATCC 204508 / S288c) (Baker's yeast) protein is Transposon Ty2-LR2 Gag-Pol polyprotein (TY2B-LR2).